Here is a 359-residue protein sequence, read N- to C-terminus: Peptide chain release factor 1 (359 aa).

Residue Gln-236 is modified to N5-methylglutamine.

It belongs to the prokaryotic/mitochondrial release factor family. Post-translationally, methylated by PrmC. Methylation increases the termination efficiency of RF1.

The protein localises to the cytoplasm. Functionally, peptide chain release factor 1 directs the termination of translation in response to the peptide chain termination codons UAG and UAA. This chain is Peptide chain release factor 1, found in Streptococcus agalactiae.